Reading from the N-terminus, the 408-residue chain is MTATSDLIESLISYSWDDWQVTRQEARRVIAAIRNDNVPDATIAALDKSGSLIKLFQRVGPPELARSLIASIAGRTTMQRYQARNALIRSLINNPLGTQTDNWIYFPTITFFDICADLADAAGRLGFAAAGATGVASQAIQGPFSGVGATGVNPTDLPSIAFGDQLKLLNKDPATVTKYSNPLGDLGAYLSQLSPQDKLNQAQTLVGQPISTLFPDAYPGNPPSRAKVMSAAARKYDLTPQLIGAIILAEQRDQTRDEDAKDYQAAVSIKSANTSIGLGQVVVSTAIKYELFTDLLGQPVRRGLSRKAVATLLASDEFNIFATARYIRYVANLASQQDLRKLPKTRGAFPSIDLRAYAGNPRNWPRDNVRALASEYTSRPWDDNLSPGWPMFVDDAYATFLDPGMRFP.

Asn-181, Asp-253, Gln-254, Glu-258, Glu-375, Ser-378, Arg-379, Asp-382, and Asn-384 together coordinate Ca(2+).

Forms a heterotetramer with Tsi3 consisting of two Tse3 dimers and two Tsi3 dimers. Formation of the complex inactivates Tse3 enzymatic activity. Requires Ca(2+) as cofactor.

It is found in the host membrane. The protein localises to the secreted. The enzyme catalyses Hydrolysis of (1-&gt;4)-beta-linkages between N-acetylmuramic acid and N-acetyl-D-glucosamine residues in a peptidoglycan and between N-acetyl-D-glucosamine residues in chitodextrins.. Enzymatic activity depends on membrane binding. Its function is as follows. Toxin secreted by the H1 type VI (H1-T6SS) secretion system into the periplasm of recipient cells. Degrades peptidoglycan via muramidase activity thereby helping itself to compete with other bacteria. To protect itself, the bacterium synthesizes immunity protein Tsi3 that specifically interacts with and inactivates cognate toxin. In Pseudomonas aeruginosa (strain ATCC 15692 / DSM 22644 / CIP 104116 / JCM 14847 / LMG 12228 / 1C / PRS 101 / PAO1), this protein is Peptidoglycan muramidase Tse3.